The following is a 156-amino-acid chain: Phosphopantetheine adenylyltransferase (156 aa).

Residue T10 coordinates substrate. Residues T10 to F11 and H18 contribute to the ATP site. The substrate site is built by K42, L74, and R88. ATP-binding positions include G89–R91, E99, and N124–S130.

Belongs to the bacterial CoaD family. As to quaternary structure, homohexamer. It depends on Mg(2+) as a cofactor.

It localises to the cytoplasm. It carries out the reaction (R)-4'-phosphopantetheine + ATP + H(+) = 3'-dephospho-CoA + diphosphate. It participates in cofactor biosynthesis; coenzyme A biosynthesis; CoA from (R)-pantothenate: step 4/5. In terms of biological role, reversibly transfers an adenylyl group from ATP to 4'-phosphopantetheine, yielding dephospho-CoA (dPCoA) and pyrophosphate. This is Phosphopantetheine adenylyltransferase from Campylobacter concisus (strain 13826).